Consider the following 257-residue polypeptide: MNKIIEVNNVSYHYDKEHALENIHFQVEKGSFTGLIGPNGSGKSTMLKLILGVLKKQQGSIALFGEKQADFKDWVKIGFVSQKSNAFNSAFPATVKEVVASGLTKKKGLFKTLNNQDKEAIDYALKRVEMTDYLHRNIGELSGGQQQRVFIARALVSRPELLILDEPTVGVDVENVKAFYELLAELNRTEEMTLLLVTHDLVAVNTYVNHVISINKRIIFDGSAHEYQHYLADRELEILAEQRRREDACLDCDASPV.

An ABC transporter domain is found at 5–241; the sequence is IEVNNVSYHY…ADRELEILAE (237 aa). 37 to 44 serves as a coordination point for ATP; the sequence is GPNGSGKS.

This sequence belongs to the ABC transporter superfamily.

Involved in a zinc uptake transport system. This is Zinc uptake system ATP-binding protein ZurA (zurA) from Listeria innocua serovar 6a (strain ATCC BAA-680 / CLIP 11262).